A 199-amino-acid polypeptide reads, in one-letter code: Early nodulin-like protein 3 (199 aa).

An N-terminal signal peptide occupies residues 1 to 23; the sequence is MGLVMRFDLYLMFVMLMGLGFTI. Positions 27–128 constitute a Phytocyanin domain; sequence YKFYVGGKDG…GQKLAVKVLS (102 aa). Asn-57 and Asn-83 each carry an N-linked (GlcNAc...) asparagine glycan. An intrachain disulfide couples Cys-82 to Cys-116. Positions 130–180 are disordered; the sequence is VHHSHSPRHTSPSPSPVHQELSSPGPSPGVEPSSDSNSRVPAPGPATAPNS. The segment covering 138–165 has biased composition (low complexity); that stretch reads HTSPSPSPVHQELSSPGPSPGVEPSSDS. Asn-179 carries the GPI-anchor amidated asparagine lipid modification. Positions 180 to 199 are cleaved as a propeptide — removed in mature form; it reads SAGLVGPGMVVLVIMISSLF.

The protein belongs to the early nodulin-like (ENODL) family. As to expression, confined to flowers.

It is found in the cell membrane. In terms of biological role, may act as a carbohydrate transporter. In Arabidopsis thaliana (Mouse-ear cress), this protein is Early nodulin-like protein 3.